The primary structure comprises 187 residues: Large ribosomal subunit protein uL6 (187 aa).

The disordered stretch occupies residues 151 to 170 (EAARIRSLRPPEPYKGKGIK).

Belongs to the universal ribosomal protein uL6 family. Part of the 50S ribosomal subunit.

Its function is as follows. This protein binds to the 23S rRNA, and is important in its secondary structure. It is located near the subunit interface in the base of the L7/L12 stalk, and near the tRNA binding site of the peptidyltransferase center. The chain is Large ribosomal subunit protein uL6 from Chloroflexus aurantiacus (strain ATCC 29366 / DSM 635 / J-10-fl).